A 250-amino-acid polypeptide reads, in one-letter code: Tripartite motif-containing protein 74 (250 aa).

Residues C16 to W57 form an RING-type zinc finger. The B box-type zinc-finger motif lies at P84 to V125. Residues C89, H92, C111, and H117 each contribute to the Zn(2+) site. Coiled coils occupy residues V125–D169 and L204–E235.

Belongs to the TRIM/RBCC family.

The protein is Tripartite motif-containing protein 74 (TRIM74) of Homo sapiens (Human).